The chain runs to 375 residues: MNIKSLLLGSAAALVAASGAQAADAIVAPEPEAVEYVRVCDAYGAGYFYIPGTETCLRVHGYVRYDVKGGDDVYSGTDRKGWDKSARFALRVSTGSETELGTLKTFTELRFNYSASNSREDGYYGTNSDGTVMQFAYIQLGGLRVGIDESEFQTFTGYLGDVINDDVISAGTYRTGKISYTFTGGNGFSAVIALEQGGDNDGGYTPVFKDSQGREINGRGYQIDGYMPDVVGGLKYAGGWGSIAGVVAYDSVIEEWATKVRGDVNITDQFSVWLQGAYSSAATPDQNYGQWGGDWAVWGGLKYQATQKAAFNLQAAHDDWGKTAVTANVAYELVPGFTITPEVSYTKFSNEWKRELGNDTLDDAWGGIVRFQRSF.

The N-terminal stretch at M1 to A22 is a signal peptide.

This sequence belongs to the alphaproteobacteria porin family. In terms of assembly, homotrimer.

The protein localises to the cell outer membrane. In terms of biological role, forms passive diffusion pores that allow small molecular weight hydrophilic materials across the outer membrane. The polypeptide is Porin Omp2b (omp2b) (Brucella suis).